A 332-amino-acid chain; its full sequence is Probable ABC transporter permease protein YphD (332 aa).

The next 10 membrane-spanning stretches (helical) occupy residues 28-48, 63-83, 84-104, 105-125, 131-151, 172-192, 222-242, 251-271, 278-298, and 303-323; these read GLLV…PGFI, IGIA…DVSV, GPMV…EVPL, AVAC…AGVL, VPSF…GLFM, FLGV…FVFI, VRIL…ILLA, GAAN…GTAL, LFGT…LVLL, and FFQQ…NILL.

The protein belongs to the binding-protein-dependent transport system permease family. AraH/RbsC subfamily.

It is found in the cell inner membrane. Probably part of the binding-protein-dependent transport system YphDEF. Probably responsible for the translocation of the substrate across the membrane. The chain is Probable ABC transporter permease protein YphD (yphD) from Escherichia coli (strain K12).